Consider the following 381-residue polypeptide: GDSL esterase/lipase At3g48460 (381 aa).

The first 26 residues, 1-26 (MSSSISPLLTTAISVAILLFSTISTA), serve as a signal peptide directing secretion. The active-site Nucleophile is the Ser45. N-linked (GlcNAc...) asparagine glycans are attached at residues Asn112, Asn140, and Asn258. Active-site residues include Asp344 and His347.

This sequence belongs to the 'GDSL' lipolytic enzyme family.

The protein localises to the secreted. The protein is GDSL esterase/lipase At3g48460 of Arabidopsis thaliana (Mouse-ear cress).